Reading from the N-terminus, the 988-residue chain is Voltage-gated delayed rectifier potassium channel KCNH5 (988 aa).

Residues 1-217 (MPGGKRGLVA…LHYCAFKTTW (217 aa)) lie on the Cytoplasmic side of the membrane. Residues 14-86 (TFLENIVRRS…TIEKVRQTFD (73 aa)) enclose the PAS domain. A PAC domain is found at 91 to 143 (NCFEVLLYKKNRTPVWFYMQIAPIRNEHEKVVLFLCTFKDITLFKQPIEDDST). The helical transmembrane segment at 218-238 (DWVILILTFYTAIMVPYNVSF) threads the bilayer. At 239-243 (KTKQN) the chain is on the extracellular side. A helical membrane pass occupies residues 244–264 (NIAWLVLDSVVDVIFLVDIVL). The Cytoplasmic portion of the chain corresponds to 265-291 (NFHTTFVGPGGEVISDPKLIRMNYLKT). The helical transmembrane segment at 292 to 312 (WFVIDLLSCLPYDIINAFENV) threads the bilayer. Residues 313–319 (DEGISSL) lie on the Extracellular side of the membrane. Residues 320 to 340 (FSSLKVVRLLRLGRVARKLDH) form a helical; Voltage-sensor membrane-spanning segment. Residues 341–346 (YLEYGA) are Cytoplasmic-facing. Residues 347-367 (AVLVLLVCVFGLVAHWLACIW) traverse the membrane as a helical segment. Residues 368–419 (YSIGDYEVIDEVTNTIQIDSWLYQLALSIGTPYRYNTSAGIWEGGPSKDSLY) are Extracellular-facing. The N-linked (GlcNAc...) asparagine glycan is linked to Asn403. An intramembrane region (pore-forming) is located at residues 420-440 (VSSLYFTMTSLTTIGFGNIAP). A Selectivity filter motif is present at residues 432–437 (TIGFGN). The Extracellular portion of the chain corresponds to 441-446 (TTDVEK). Residues 447–467 (MFSVAMMMVGSLLYATIFGNV) traverse the membrane as a helical segment. At 468-988 (TTIFQQMYAN…PESDKDEINF (521 aa)) the chain is on the cytoplasmic side. 550–667 (AFRLASDGCL…NSFSRNLTLT (118 aa)) is a binding site for a nucleoside 3',5'-cyclic phosphate. The tract at residues 704–715 (HPVRKLFQKFKQ) is calmodulin-binding. A disordered region spans residues 718 to 742 (ELRNQGSAQSDPERSQLQVESRPLQ). The segment covering 721-742 (NQGSAQSDPERSQLQVESRPLQ) has biased composition (polar residues). Residue Lys785 forms a Glycyl lysine isopeptide (Lys-Gly) (interchain with G-Cter in ubiquitin) linkage. 2 disordered regions span residues 839 to 897 (LLSE…AKHP) and 946 to 965 (SVPQ…PPQI). Residues 871–885 (SDLRLDKAGEARSPL) show a composition bias toward basic and acidic residues. Ser883 carries the post-translational modification Phosphoserine. A CAD (involved in subunit assembly) region spans residues 909 to 948 (TLQEVKHELKEDIQLLSCRMTALEKQVAEILKLLSEKSVP).

This sequence belongs to the potassium channel family. H (Eag) (TC 1.A.1.20) subfamily. Kv10.2/KCNH5 sub-subfamily. As to quaternary structure, homotetramer. The potassium channel is probably composed of a homo- or heterotetrameric complex of pore-forming alpha subunits that can associate with modulating beta subunits. Heteromultimer with KCNH1/EAG. In terms of tissue distribution, detected in adult testis and in embryonic and adult brain, but not in other tissues. Highly expressed in specific brain areas, such as neocortex, olfactory bulb, primary olfactory cortex and brain stem. In cortex, expression is concentrated in a narrow band toward the middle lamella (layer IV). Moderately expressed in spinal cord, dorsal thalamic nuclei, medial hypothalamus, colliculus, lateral lemniscus, pontine nuclei and Islands of Calleja.

Its subcellular location is the membrane. It catalyses the reaction K(+)(in) = K(+)(out). Inhibited by low nanomolar concentrations of cytosolic calcium. In terms of biological role, pore-forming (alpha) subunit of a voltage-gated delayed rectifier potassium channel that mediates outward-rectifying potassium currents which, on depolarization, reaches a steady-state level and do not inactivate. The kinetic is characterized by a slow activation time course and a small voltage dependence of the activation time constants, therefore, starts to open at more negative voltages. The activation kinetics depend on the prepulse potential and external divalent cation concentration. The time course of activation is biphasic with a fast and a slowly activating current component. With negative prepulses, the current activation is delayed and slowed down several fold, whereas more positive prepulses speed up activation, therefore the activation rate depends on holding potential. The protein is Voltage-gated delayed rectifier potassium channel KCNH5 of Rattus norvegicus (Rat).